The sequence spans 229 residues: 3-isopropylmalate dehydratase small subunit (229 aa).

Residues 208–229 are disordered; the sequence is KIESAREPDDDWTGPLADRGII.

Belongs to the LeuD family. LeuD type 1 subfamily. Heterodimer of LeuC and LeuD.

The enzyme catalyses (2R,3S)-3-isopropylmalate = (2S)-2-isopropylmalate. The protein operates within amino-acid biosynthesis; L-leucine biosynthesis; L-leucine from 3-methyl-2-oxobutanoate: step 2/4. Its function is as follows. Catalyzes the isomerization between 2-isopropylmalate and 3-isopropylmalate, via the formation of 2-isopropylmaleate. This chain is 3-isopropylmalate dehydratase small subunit, found in Bifidobacterium longum subsp. infantis (strain ATCC 15697 / DSM 20088 / JCM 1222 / NCTC 11817 / S12).